A 163-amino-acid polypeptide reads, in one-letter code: Lipoprotein signal peptidase (163 aa).

Transmembrane regions (helical) follow at residues 8–28 (FFLL…YWVM), 61–81 (FSHW…LWLW), and 93–113 (FGFT…ICFY). Active-site residues include Asp117 and Asp136. The helical transmembrane segment at 128 to 148 (YFAVFNLADTFITLGVIAIII) threads the bilayer.

Belongs to the peptidase A8 family.

It localises to the cell inner membrane. The catalysed reaction is Release of signal peptides from bacterial membrane prolipoproteins. Hydrolyzes -Xaa-Yaa-Zaa-|-(S,diacylglyceryl)Cys-, in which Xaa is hydrophobic (preferably Leu), and Yaa (Ala or Ser) and Zaa (Gly or Ala) have small, neutral side chains.. It participates in protein modification; lipoprotein biosynthesis (signal peptide cleavage). Functionally, this protein specifically catalyzes the removal of signal peptides from prolipoproteins. This chain is Lipoprotein signal peptidase, found in Bartonella henselae (strain ATCC 49882 / DSM 28221 / CCUG 30454 / Houston 1) (Rochalimaea henselae).